A 396-amino-acid chain; its full sequence is CCA-adding enzyme (396 aa).

Residues Gly-27 and Arg-30 each contribute to the ATP site. Residues Gly-27 and Arg-30 each contribute to the CTP site. Positions 40 and 42 each coordinate Mg(2+). Residues Arg-111, Asp-154, Arg-157, Arg-160, and Arg-163 each coordinate ATP. Positions 111, 154, 157, 160, and 163 each coordinate CTP.

This sequence belongs to the tRNA nucleotidyltransferase/poly(A) polymerase family. Bacterial CCA-adding enzyme type 3 subfamily. In terms of assembly, homodimer. The cofactor is Mg(2+).

The enzyme catalyses a tRNA precursor + 2 CTP + ATP = a tRNA with a 3' CCA end + 3 diphosphate. The catalysed reaction is a tRNA with a 3' CCA end + 2 CTP + ATP = a tRNA with a 3' CCACCA end + 3 diphosphate. Catalyzes the addition and repair of the essential 3'-terminal CCA sequence in tRNAs without using a nucleic acid template. Adds these three nucleotides in the order of C, C, and A to the tRNA nucleotide-73, using CTP and ATP as substrates and producing inorganic pyrophosphate. tRNA 3'-terminal CCA addition is required both for tRNA processing and repair. Also involved in tRNA surveillance by mediating tandem CCA addition to generate a CCACCA at the 3' terminus of unstable tRNAs. While stable tRNAs receive only 3'-terminal CCA, unstable tRNAs are marked with CCACCA and rapidly degraded. This is CCA-adding enzyme from Bacillus velezensis (strain DSM 23117 / BGSC 10A6 / LMG 26770 / FZB42) (Bacillus amyloliquefaciens subsp. plantarum).